The primary structure comprises 335 residues: Large ribosomal subunit protein uL10 (335 aa).

Positions 304-335 are disordered; that stretch reads GAAAPVEEAPVEEKKEEKKEEAAAPAGLGMLF. Basic and acidic residues predominate over residues 314–325; it reads VEEKKEEKKEEA.

It belongs to the universal ribosomal protein uL10 family. In terms of assembly, part of the 50S ribosomal subunit. Homodimer, it forms part of the ribosomal stalk which helps the ribosome interact with GTP-bound translation factors. Forms both a pentameric L10(L12)2(L12)2 and heptameric L10(L12)2(L12)2(L12)2 complex, where L10 forms an elongated spine to which the L12 dimers bind in a sequential fashion. The proportion of heptameric complexes increases during cell growth.

Functionally, forms part of the ribosomal stalk, playing a central role in the interaction of the ribosome with GTP-bound translation factors. This chain is Large ribosomal subunit protein uL10, found in Methanococcus maripaludis (strain DSM 14266 / JCM 13030 / NBRC 101832 / S2 / LL).